The chain runs to 199 residues: Cutinase CUT1 (199 aa).

A signal peptide spans 1-18; sequence MKFTTLATLALGAVSALA. A propeptide spanning residues 19-27 is cleaved from the precursor; the sequence is APVTELESR. Gln28 bears the Pyrrolidone carboxylic acid mark. A disulfide bond links Cys31 and Cys105. Catalysis depends on Ser116, which acts as the Nucleophile. Cys164 and Cys171 are oxidised to a cystine. Residue Asp168 is part of the active site. His181 functions as the Proton donor/acceptor in the catalytic mechanism.

This sequence belongs to the cutinase family. The 2 disulfide bonds play a critical role in holding the catalytic residues in juxta-position; reduction of the disulfide bridges results in the complete inactivation of the enzyme.

It catalyses the reaction cutin + H2O = cutin monomers.. Catalyzes the hydrolysis of complex carboxylic polyesters found in the cell wall of plants. Degrades cutin, a macromolecule that forms the structure of the plant cuticle. Also degrades suberin, a specialized macromolecule found in the cell wall of various plant tissues. This is Cutinase CUT1 from Coprinopsis cinerea (Inky cap fungus).